Consider the following 481-residue polypeptide: Trigger factor (481 aa).

The PPIase FKBP-type domain occupies 174–261; that stretch reads GDIAVVSFKG…LKDLKEKELP (88 aa). A disordered region spans residues 435-481; sequence VKEKTTKASQASKTTKAKKTTTKTTKATKTATKTTKATKTQNKKEKK. Positions 456–474 are enriched in low complexity; the sequence is TKTTKATKTATKTTKATKT.

This sequence belongs to the FKBP-type PPIase family. Tig subfamily.

The protein localises to the cytoplasm. The catalysed reaction is [protein]-peptidylproline (omega=180) = [protein]-peptidylproline (omega=0). Functionally, involved in protein export. Acts as a chaperone by maintaining the newly synthesized protein in an open conformation. Functions as a peptidyl-prolyl cis-trans isomerase. This Prochlorococcus marinus (strain MIT 9312) protein is Trigger factor.